Reading from the N-terminus, the 395-residue chain is ATP synthase subunit beta, chloroplastic (395 aa).

72-79 serves as a coordination point for ATP; sequence GGAGVGKT.

This sequence belongs to the ATPase alpha/beta chains family. In terms of assembly, F-type ATPases have 2 components, CF(1) - the catalytic core - and CF(0) - the membrane proton channel. CF(1) has five subunits: alpha(3), beta(3), gamma(1), delta(1), epsilon(1). CF(0) has four main subunits: a(1), b(1), b'(1) and c(9-12).

Its subcellular location is the plastid. The protein localises to the chloroplast thylakoid membrane. It catalyses the reaction ATP + H2O + 4 H(+)(in) = ADP + phosphate + 5 H(+)(out). Its function is as follows. Produces ATP from ADP in the presence of a proton gradient across the membrane. The catalytic sites are hosted primarily by the beta subunits. This is ATP synthase subunit beta, chloroplastic from Microlepia platyphylla (Plate fern).